Reading from the N-terminus, the 396-residue chain is 8-amino-7-oxononanoate synthase (396 aa).

R21 contributes to the substrate binding site. G108–Y109 lines the pyridoxal 5'-phosphate pocket. H133 lines the substrate pocket. Pyridoxal 5'-phosphate is bound by residues S179, H207, and T236. Position 239 is an N6-(pyridoxal phosphate)lysine (K239). Residue T353 participates in substrate binding.

It belongs to the class-II pyridoxal-phosphate-dependent aminotransferase family. BioF subfamily. In terms of assembly, homodimer. The cofactor is pyridoxal 5'-phosphate.

The catalysed reaction is 6-carboxyhexanoyl-[ACP] + L-alanine + H(+) = (8S)-8-amino-7-oxononanoate + holo-[ACP] + CO2. It participates in cofactor biosynthesis; biotin biosynthesis. In terms of biological role, catalyzes the decarboxylative condensation of pimeloyl-[acyl-carrier protein] and L-alanine to produce 8-amino-7-oxononanoate (AON), [acyl-carrier protein], and carbon dioxide. The polypeptide is 8-amino-7-oxononanoate synthase (Hahella chejuensis (strain KCTC 2396)).